A 317-amino-acid polypeptide reads, in one-letter code: Putative ribose-phosphate pyrophosphokinase (317 aa).

Positions 211–224 are binding of phosphoribosylpyrophosphate; that stretch reads GRDVIVLDDEIAKG.

This sequence belongs to the ribose-phosphate pyrophosphokinase family.

The catalysed reaction is D-ribose 5-phosphate + ATP = 5-phospho-alpha-D-ribose 1-diphosphate + AMP + H(+). The protein is Putative ribose-phosphate pyrophosphokinase of Streptomyces coelicolor (strain ATCC BAA-471 / A3(2) / M145).